Here is a 426-residue protein sequence, read N- to C-terminus: UPF0761 membrane protein Nmul_A0452 (426 aa).

6 consecutive transmembrane segments (helical) span residues Leu-48–Phe-68, Leu-106–Asp-126, Leu-145–Leu-165, Leu-187–Val-207, Ala-217–Phe-237, and Ile-255–Ile-275.

The protein belongs to the UPF0761 family.

The protein localises to the cell inner membrane. The polypeptide is UPF0761 membrane protein Nmul_A0452 (Nitrosospira multiformis (strain ATCC 25196 / NCIMB 11849 / C 71)).